Here is a 110-residue protein sequence, read N- to C-terminus: Large ribosomal subunit protein uL24 (110 aa).

Belongs to the universal ribosomal protein uL24 family. Part of the 50S ribosomal subunit.

In terms of biological role, one of two assembly initiator proteins, it binds directly to the 5'-end of the 23S rRNA, where it nucleates assembly of the 50S subunit. Its function is as follows. One of the proteins that surrounds the polypeptide exit tunnel on the outside of the subunit. The protein is Large ribosomal subunit protein uL24 of Caldicellulosiruptor saccharolyticus (strain ATCC 43494 / DSM 8903 / Tp8T 6331).